The following is a 402-amino-acid chain: Tol-Pal system protein TolB (402 aa).

The N-terminal stretch at methionine 1–alanine 17 is a signal peptide.

It belongs to the TolB family. In terms of assembly, the Tol-Pal system is composed of five core proteins: the inner membrane proteins TolA, TolQ and TolR, the periplasmic protein TolB and the outer membrane protein Pal. They form a network linking the inner and outer membranes and the peptidoglycan layer.

The protein localises to the periplasm. Its function is as follows. Part of the Tol-Pal system, which plays a role in outer membrane invagination during cell division and is important for maintaining outer membrane integrity. The chain is Tol-Pal system protein TolB from Campylobacter jejuni (strain RM1221).